The following is a 411-amino-acid chain: Putative polysaccharide ligase RC0486 (411 aa).

The next 10 membrane-spanning stretches (helical) occupy residues 15–35 (LGML…LISF), 78–98 (GITM…IHLI), 101–121 (LATF…SNSA), 133–153 (LIFG…SNGF), 166–186 (MLDR…IILL), 207–227 (ISDS…FILT), 233–253 (IFFK…PVIA), 328–348 (ILQI…CLVY), 361–381 (NFKA…MISY), and 383–403 (IWQI…KLLV).

The protein belongs to the O-antigen ligase family.

The protein resides in the membrane. The polypeptide is Putative polysaccharide ligase RC0486 (Rickettsia conorii (strain ATCC VR-613 / Malish 7)).